Reading from the N-terminus, the 479-residue chain is Ammonium transporter Rh type C (479 aa).

Topologically, residues 1–9 (MAWNTNLRW) are cytoplasmic. A helical membrane pass occupies residues 10–30 (RLPLTCLLLQVAMVILFGVFV). The Extracellular portion of the chain corresponds to 31–60 (RYDFDADAHWWTERKHKNLSEVENEFYYRY). Asn48 carries an N-linked (GlcNAc...) asparagine glycan. Residues 61-81 (PSFQDVHVMVFVGFGFLMTFL) form a helical membrane-spanning segment. Topologically, residues 82 to 85 (QRYG) are cytoplasmic. Residues 86–106 (FSAVGFNFLLAAFGIQWALLM) form a helical membrane-spanning segment. The Extracellular segment spans residues 107-123 (QGWFHFLEGRYIVVGVE). A helical transmembrane segment spans residues 124–144 (NLINADFCVASVCVAFGAVLG). The Cytoplasmic segment spans residues 145–148 (KVSP). The chain crosses the membrane as a helical span at residues 149 to 169 (IQLLIMTFFQVTLFAVNEFIL). At 170–177 (LNLLKVKD) the chain is on the extracellular side. The helical transmembrane segment at 178 to 200 (AGGSMTIHTFYAYFELTVTRILY) threads the bilayer. Over 201 to 218 (RRNLEQSKERQSSAYQSD) the chain is Cytoplasmic. A helical transmembrane segment spans residues 219–239 (LFAMIGTLFLWMYWPSFNSAI). Over 240–250 (SYHGDSQHRAA) the chain is Extracellular. The helical transmembrane segment at 251-271 (INTYCSLAACVLTSVAVSSAL) threads the bilayer. Topologically, residues 272 to 281 (HKKGKLDMVH) are cytoplasmic. Residues 282 to 302 (IQNATLAGGVAVGTTAEMMLM) traverse the membrane as a helical segment. A topological domain (extracellular) is located at residue Pro303. A helical membrane pass occupies residues 304–324 (YGALIIGFICGIISTLGFVYL). Residues 325–345 (TPFLESRLHIQDTCGINNLHG) are Cytoplasmic-facing. The helical transmembrane segment at 346-366 (IPGIIGGIVGAVTAASASLEV) threads the bilayer. At 367 to 394 (YGKEGLVHSFDFQDFKRDWTARTQGKFQ) the chain is on the extracellular side. Residues 395–415 (IYGLLVTLAMALMGGIIVGLI) traverse the membrane as a helical segment. Residues 416–479 (LRLPFWGQPS…PMASSVPLVP (64 aa)) lie on the Cytoplasmic side of the membrane.

The protein belongs to the ammonium transporter (TC 2.A.49) family. Rh subfamily. In terms of assembly, homotrimer. Post-translationally, N-glycosylated.

The protein resides in the apical cell membrane. It catalyses the reaction NH4(+)(in) = NH4(+)(out). It carries out the reaction methylamine(out) = methylamine(in). The catalysed reaction is CO2(out) = CO2(in). Ammonium transporter involved in the maintenance of acid-base homeostasis. Transports ammonium and its related derivative methylammonium across the plasma membrane of epithelial cells likely contributing to renal transepithelial ammonia transport and ammonia metabolism. Postulated to primarily mediate an electroneutral bidirectional transport of NH3 ammonia species according to a mechanism that implies interaction of an NH4(+) ion with acidic residues of the pore entry followed by dissociation of NH4(+) into NH3 and H(+). As a result NH3 transits through the central pore and is protonated on the extracellular side reforming NH4(+). May act as a CO2 channel providing for renal acid secretion. This is Ammonium transporter Rh type C (RHCG) from Macaca mulatta (Rhesus macaque).